The primary structure comprises 215 residues: 3-isopropylmalate dehydratase small subunit (215 aa).

This sequence belongs to the LeuD family. LeuD type 1 subfamily. As to quaternary structure, heterodimer of LeuC and LeuD.

The enzyme catalyses (2R,3S)-3-isopropylmalate = (2S)-2-isopropylmalate. It functions in the pathway amino-acid biosynthesis; L-leucine biosynthesis; L-leucine from 3-methyl-2-oxobutanoate: step 2/4. Catalyzes the isomerization between 2-isopropylmalate and 3-isopropylmalate, via the formation of 2-isopropylmaleate. This is 3-isopropylmalate dehydratase small subunit from Xylella fastidiosa (strain M23).